The primary structure comprises 456 residues: Glutamate--tRNA ligase 1 (456 aa).

The 'HIGH' region motif lies at 9–19 (PSPTGQIHIGN). Residues 250-254 (GLSKR) carry the 'KMSKS' region motif. Lysine 253 provides a ligand contact to ATP.

Belongs to the class-I aminoacyl-tRNA synthetase family. Glutamate--tRNA ligase type 1 subfamily. In terms of assembly, monomer.

The protein resides in the cytoplasm. The catalysed reaction is tRNA(Glu) + L-glutamate + ATP = L-glutamyl-tRNA(Glu) + AMP + diphosphate. In terms of biological role, catalyzes the attachment of glutamate to tRNA(Glu) in a two-step reaction: glutamate is first activated by ATP to form Glu-AMP and then transferred to the acceptor end of tRNA(Glu). In Chelativorans sp. (strain BNC1), this protein is Glutamate--tRNA ligase 1.